The chain runs to 774 residues: Effector protein hopW1-1 (774 aa).

Disordered regions lie at residues methionine 1 to glutamine 33 and cysteine 301 to glutamine 340. Residues threonine 9 to serine 23 show a composition bias toward low complexity. A compositionally biased stretch (polar residues) spans alanine 24–glutamine 33.

Belongs to the HopW family. Interacts (via C-terminus) with Arabidopsis WIN1, WIN2 and WIN3.

It is found in the secreted. In terms of biological role, induces hypersensitive response (HR). In Pseudomonas syringae pv. maculicola, this protein is Effector protein hopW1-1 (hopW1-1).